A 1315-amino-acid polypeptide reads, in one-letter code: Claspin (1315 aa).

Disordered regions lie at residues 22-276 (EAAD…AARL) and 345-474 (PADA…EQKT). 6 positions are modified to phosphoserine: serine 26, serine 42, serine 46, serine 53, serine 65, and serine 67. Residues 65 to 74 (SDSEAEDRDD) show a composition bias toward acidic residues. Polar residues predominate over residues 91-101 (NLHSGKSQSRS). The span at 108 to 118 (DSDESDMEETP) shows a compositional bias: acidic residues. Serine 109, serine 112, and serine 119 each carry phosphoserine. A compositionally biased stretch (polar residues) spans 119 to 128 (SQESPETQEA). Composition is skewed to basic and acidic residues over residues 153-178 (LLRE…MEKI) and 186-197 (TRCEESDADRPL). Residues 159 to 187 (EGKAKSKRRLEKEERTMEKIRRLKKKETR) adopt a coiled-coil conformation. Residues 205-228 (EDSDLFETGLEEENDSALEDEESL) show a composition bias toward acidic residues. A Phosphoserine modification is found at serine 220. Over residues 235-245 (VKNKVKNRKKK) the composition is skewed to basic residues. Phosphoserine is present on serine 255. 2 stretches are compositionally biased toward basic and acidic residues: residues 391–415 (ACGK…DDRP) and 455–470 (EELK…EGMP). At serine 522 the chain carries Phosphoserine. A coiled-coil region spans residues 599–626 (EKLQMLKAKLQEAMKLRRLEERQKRQAL). The tract at residues 625 to 691 (ALFKLDNEDG…SSDIGKSVAL (67 aa)) is disordered. The span at 632–657 (EDGFEEEEEEEEMTDESEEDGEEETT) shows a compositional bias: acidic residues. Over residues 669–679 (KDEKETDKENT) the composition is skewed to basic and acidic residues. Phosphoserine is present on residues serine 698, serine 701, serine 709, serine 722, and serine 740. Positions 713–750 (MGYFPTEEKSETDEYLAKQSDKLDEDDSSSLLTKESSH) are disordered. Positions 741–750 (SSLLTKESSH) are enriched in low complexity. A phosphoserine mark is found at serine 785, serine 787, serine 810, serine 816, and serine 823. Position 868 is an N6-acetyllysine (lysine 868). 2 CKB motif repeats span residues 887 to 896 (ELLDLCTGQF) and 917 to 926 (ELLNLCSGKF). Threonine 893 is subject to Phosphothreonine; by CHEK1. Disordered regions lie at residues 924–1002 (GKFP…NDEE) and 1032–1052 (EDEA…DGEE). Residue serine 932 is modified to Phosphoserine. Residues 954 to 963 (EALALCSGSF) form a CKB motif 3 repeat. Positions 966 to 1063 (DREEEGEEEE…DEYEEDVIDE (98 aa)) are acidic patch. Composition is skewed to acidic residues over residues 967–977 (REEEGEEEEFG), 990–1002 (SDED…NDEE), and 1043–1052 (GSEDEYDGEE). A phosphoserine mark is found at serine 990, serine 996, and serine 998. The stretch at 1001-1036 (EELALDLEDDEEELLKQSEKMKRQMRLKKYLEDEAE) forms a coiled coil. A phosphoserine mark is found at serine 1133 and serine 1265. The tract at residues 1264 to 1315 (LSPTKAEAAKDSSKPQVRRRGLSSMMSPSPKRLKTNGSSPGPKRSIFRYLES) is disordered.

The protein belongs to the claspin family. In terms of assembly, interacts (phosphorylation-dependent) with CHEK1; regulates CLSPN function in checkpoint for DNA damage and replication. Interacts with ATR and RAD9A and these interactions are slightly reduced during checkpoint activation. Interacts with BRCA1 and this interaction increases during checkpoint activation. Interacts with TIMELESS; the interaction is required for leading-strand replication. Associates with the MCM2-7 complex and other replisome factors. Interacts (via the acidic patch) with CDC7; the interaction is required for phosphorylation of MCM proteins and CLASPIN by CDC7. Interacts with PCNA. Interacts with FZR1. In terms of processing, phosphorylated. Undergoes ATR-dependent phosphorylation by CHEK1 during activation of DNA replication or damage checkpoints. Phosphorylation by CSNK1G1/CK1 promotes CHEK1 binding. Phosphorylated by CDC7 during DNA replication, phosphorylation inhibits interaction between the acidic patch and N-terminal segments leading to increased binding to DNA and PCNA. Post-translationally, ubiquitinated by the anaphase promoting complex/cyclosome (APC/C) during G1 phase, leading to its degradation by the proteasome. Ubiquitination is mediated via its interaction with FZR1/CDH1. Following DNA damage, it is deubiquitinated by USP28 in G2 phase, preventing its degradation. Proteolytically cleaved by caspase-7 (CASP7) in response to apoptosis, leading to its inactivation.

It localises to the nucleus. Required for checkpoint mediated cell cycle arrest in response to inhibition of DNA replication or to DNA damage induced by both ionizing and UV irradiation. Adapter protein which binds to BRCA1 and the checkpoint kinase CHEK1 and facilitates the ATR-dependent phosphorylation of both proteins. Also required to maintain normal rates of replication fork progression during unperturbed DNA replication. Binds directly to DNA, with particular affinity for branched or forked molecules and interacts with multiple protein components of the replisome such as the MCM2-7 complex and TIMELESS. Important for initiation of DNA replication, recruits kinase CDC7 to phosphorylate MCM2-7 components. This Mus musculus (Mouse) protein is Claspin (Clspn).